Here is a 320-residue protein sequence, read N- to C-terminus: Beta-ketoacyl-[acyl-carrier-protein] synthase III (320 aa).

Active-site residues include Cys114 and His247. Residues 248-252 (QANRR) are ACP-binding. The active site involves Asn277.

It belongs to the thiolase-like superfamily. FabH family. In terms of assembly, homodimer.

The protein localises to the cytoplasm. It catalyses the reaction malonyl-[ACP] + acetyl-CoA + H(+) = 3-oxobutanoyl-[ACP] + CO2 + CoA. It participates in lipid metabolism; fatty acid biosynthesis. Catalyzes the condensation reaction of fatty acid synthesis by the addition to an acyl acceptor of two carbons from malonyl-ACP. Catalyzes the first condensation reaction which initiates fatty acid synthesis and may therefore play a role in governing the total rate of fatty acid production. Possesses both acetoacetyl-ACP synthase and acetyl transacylase activities. Its substrate specificity determines the biosynthesis of branched-chain and/or straight-chain of fatty acids. The protein is Beta-ketoacyl-[acyl-carrier-protein] synthase III of Neisseria gonorrhoeae (strain ATCC 700825 / FA 1090).